The following is a 296-amino-acid chain: MFGAFVSHRLWSDSGCTTTCITNSIANYVAFGEQIGFPFKSAQVFIAGPRKAVINIQEDDKVELLKMIVKHNLWVVAHGTYLDVPWSRRSAFVTHFIQQELLICKEVGIKGLVLHLGAVEPELIVEGLKKIKPVEGVVIYLETPHNKHHTYKYSTMEQIKELFLRIRNTRLKQIGLCIDTAHIWSSGVNISSYNDAGQWLRSLENIHSVIPPSHIMFHLNDAATECGSGIDRHASLFEGMIWKSYSHKIKQSGLYCFVEYITRHQCPAILERNLGSSMQLQTALTAEFTTLKSLLK.

A disulfide bond links cysteine 16 and cysteine 20. Zn(2+) is bound by residues histidine 78, histidine 115, glutamate 142, histidine 182, histidine 218, aspartate 231, histidine 233, and glutamate 271.

This sequence belongs to the AP endonuclease 2 family. Zn(2+) serves as cofactor.

Its subcellular location is the host nucleus. The protein resides in the host cytoplasm. The protein localises to the virion. In terms of biological role, endonuclease that plays a role in DNA repair. Cleaves phosphodiester bonds on the 5' side of apurinic or apyrimidinic sites (AP sites). In addition to endonuclease activity, the ASFV enzyme has a proofreading 3'-5' exonuclease activity that is considerably more efficient in the elimination of a mismatch than in that of a correctly paired base. Displays 3'-phosphatase and 3'-repair diesterase activities. The single nucleotide gaps generated by the AP endonuclease are filled by the viral AP endonuclease and DNA ligase. The chain is Probable AP endonuclease from Ornithodoros (relapsing fever ticks).